Here is a 348-residue protein sequence, read N- to C-terminus: Probable mitochondrial adenine nucleotide transporter BTL1 (348 aa).

3 Solcar repeats span residues 46–129, 157–241, and 251–338; these read SREA…VKRA, SWIS…MKTS, and LSRP…WKDI. 6 helical membrane passes run 52-72, 104-124, 156-176, 213-233, 256-276, and 321-341; these read FLSG…LETI, GNEI…GTFE, ISWI…STLV, FYAG…CYYF, MLVL…PLEV, and VMPS…ILLA.

Belongs to the mitochondrial carrier (TC 2.A.29) family.

It localises to the mitochondrion inner membrane. Its function is as follows. Probable mitochondrial adenylate carrier that catalyzes the transport of ATP, ADP and AMP. The polypeptide is Probable mitochondrial adenine nucleotide transporter BTL1 (Arabidopsis thaliana (Mouse-ear cress)).